We begin with the raw amino-acid sequence, 267 residues long: Phosphate import ATP-binding protein PstB (267 aa).

The ABC transporter domain occupies 12–251 (VSLDNVSIRY…EFDKTKNMFN (240 aa)). Residue 44 to 51 (GPSGCGKS) coordinates ATP.

This sequence belongs to the ABC transporter superfamily. Phosphate importer (TC 3.A.1.7) family. The complex is composed of two ATP-binding proteins (PstB), two transmembrane proteins (PstC and PstA) and a solute-binding protein (PstS).

The protein resides in the cell inner membrane. It carries out the reaction phosphate(out) + ATP + H2O = ADP + 2 phosphate(in) + H(+). Functionally, part of the ABC transporter complex PstSACB involved in phosphate import. Responsible for energy coupling to the transport system. The polypeptide is Phosphate import ATP-binding protein PstB (Prochlorococcus marinus (strain NATL2A)).